The sequence spans 231 residues: Phosphatidylserine decarboxylase proenzyme (231 aa).

The active-site Schiff-base intermediate with substrate; via pyruvic acid is S188. Residue S188 is modified to Pyruvic acid (Ser); by autocatalysis.

It belongs to the phosphatidylserine decarboxylase family. PSD-A subfamily. As to quaternary structure, heterodimer of a large membrane-associated beta subunit and a small pyruvoyl-containing alpha subunit. Pyruvate is required as a cofactor. In terms of processing, is synthesized initially as an inactive proenzyme. Formation of the active enzyme involves a self-maturation process in which the active site pyruvoyl group is generated from an internal serine residue via an autocatalytic post-translational modification. Two non-identical subunits are generated from the proenzyme in this reaction, and the pyruvate is formed at the N-terminus of the alpha chain, which is derived from the carboxyl end of the proenzyme. The post-translation cleavage follows an unusual pathway, termed non-hydrolytic serinolysis, in which the side chain hydroxyl group of the serine supplies its oxygen atom to form the C-terminus of the beta chain, while the remainder of the serine residue undergoes an oxidative deamination to produce ammonia and the pyruvoyl prosthetic group on the alpha chain.

It localises to the cell membrane. It catalyses the reaction a 1,2-diacyl-sn-glycero-3-phospho-L-serine + H(+) = a 1,2-diacyl-sn-glycero-3-phosphoethanolamine + CO2. Its pathway is phospholipid metabolism; phosphatidylethanolamine biosynthesis; phosphatidylethanolamine from CDP-diacylglycerol: step 2/2. Functionally, catalyzes the formation of phosphatidylethanolamine (PtdEtn) from phosphatidylserine (PtdSer). The protein is Phosphatidylserine decarboxylase proenzyme of Rickettsia felis (strain ATCC VR-1525 / URRWXCal2) (Rickettsia azadi).